The sequence spans 428 residues: Kynureninase (428 aa).

Pyridoxal 5'-phosphate-binding positions include threonine 104, threonine 105, phenylalanine 132 to aspartate 135, aspartate 213, histidine 216, and tyrosine 238. Lysine 239 bears the N6-(pyridoxal phosphate)lysine mark. Tryptophan 267 and threonine 295 together coordinate pyridoxal 5'-phosphate.

This sequence belongs to the kynureninase family. In terms of assembly, homodimer. The cofactor is pyridoxal 5'-phosphate.

It carries out the reaction L-kynurenine + H2O = anthranilate + L-alanine + H(+). The enzyme catalyses 3-hydroxy-L-kynurenine + H2O = 3-hydroxyanthranilate + L-alanine + H(+). It functions in the pathway amino-acid degradation; L-kynurenine degradation; L-alanine and anthranilate from L-kynurenine: step 1/1. The protein operates within cofactor biosynthesis; NAD(+) biosynthesis; quinolinate from L-kynurenine: step 2/3. Catalyzes the cleavage of L-kynurenine (L-Kyn) and L-3-hydroxykynurenine (L-3OHKyn) into anthranilic acid (AA) and 3-hydroxyanthranilic acid (3-OHAA), respectively. The chain is Kynureninase from Bacillus cereus (strain ATCC 14579 / DSM 31 / CCUG 7414 / JCM 2152 / NBRC 15305 / NCIMB 9373 / NCTC 2599 / NRRL B-3711).